Here is a 661-residue protein sequence, read N- to C-terminus: Heme transporter BhuA (661 aa).

The signal sequence occupies residues 1-23 (MKFTRTLVLVSTSLLATVATSQA). In terms of domain architecture, TBDR plug spans 48–159 (KDNIEATGGT…AAGAIRYETV (112 aa)). The TBDR beta-barrel domain occupies 170-661 (TFGARIIGSY…TFTFQTAFKF (492 aa)).

It belongs to the TonB-dependent receptor family.

The protein localises to the cell outer membrane. Its function is as follows. Heme transporter playing an important role in stationary-phase iron acquisition and required for maintenance of chronic infection in mice. The polypeptide is Heme transporter BhuA (bhuA) (Brucella abortus (strain 2308)).